The sequence spans 917 residues: Methionine--tRNA ligase, cytoplasmic (917 aa).

The 'HIGH' region motif lies at 44–54 (PYVNNVPHLGN). A 'KMSKS' region motif is present at residues 367–371 (KFSKS). Lys-370 is an ATP binding site. Disordered regions lie at residues 591–623 (GSQD…GDKK) and 702–749 (SCTP…AAAA). The segment covering 614-623 (PTKDKKGDKK) has biased composition (basic and acidic residues). A compositionally biased stretch (low complexity) spans 702-713 (SCTPTPTSTPAS). The span at 732-741 (EPKKAKEQKK) shows a compositional bias: basic and acidic residues. Residues 756 to 857 (DVGRLDMRVG…ADSKPGTPVV (102 aa)) enclose the tRNA-binding domain.

Belongs to the class-I aminoacyl-tRNA synthetase family.

The protein localises to the cytoplasm. It catalyses the reaction tRNA(Met) + L-methionine + ATP = L-methionyl-tRNA(Met) + AMP + diphosphate. This Caenorhabditis elegans protein is Methionine--tRNA ligase, cytoplasmic.